Consider the following 586-residue polypeptide: Pescadillo homolog (586 aa).

Residues 1–54 (MGGLEKKKYERGSATNYITRNKARKKLQLSLPDFRRLCILKGIYPHEPKHKKKV) form a required for 28S ribosomal RNA processing region. The segment at 1 to 257 (MGGLEKKKYE…PKIESQAQAE (257 aa)) is sufficient for nucleolar localization. Residue Lys98 is modified to N6-acetyllysine. The sufficient for interaction with MAP1B stretch occupies residues 305–414 (VTAQEEDRRK…LLLPVAEYFP (110 aa)). A BRCT domain is found at 321 to 414 (KHKKLFEGLK…LLLPVAEYFP (94 aa)). The segment at 447–508 (GEDPGNLEEE…QQRLGGKKPQ (62 aa)) is disordered. Positions 451–491 (GNLEEEEEDEDDEGDDSEGDGDVAVENEEEVVEAESEEEEE) are enriched in acidic residues. A Glycyl lysine isopeptide (Lys-Gly) (interchain with G-Cter in SUMO1); alternate cross-link involves residue Lys515. Lys515 participates in a covalent cross-link: Glycyl lysine isopeptide (Lys-Gly) (interchain with G-Cter in SUMO2); alternate. The tract at residues 537 to 586 (MMKKREKYLYQKIMFGKRRKIREANKLAEKRKAHDDAVRSEKKAKRTRPV) is required for 28S ribosomal RNA processing. Over residues 562 to 577 (KLAEKRKAHDDAVRSE) the composition is skewed to basic and acidic residues. The interval 562-586 (KLAEKRKAHDDAVRSEKKAKRTRPV) is disordered.

The protein belongs to the pescadillo family. In terms of assembly, component of the PeBoW complex, composed of BOP1, PES1 and WDR12. The complex is held together by BOP1, which interacts with PES1 via its N-terminal domain and with WDR12 via a high-affinity interaction between the seven-bladed beta-propeller domains of the 2 proteins. The PeBoW complex associates with the 66S pre-ribosome. The PeBoW complex also associates with DDX27, PES1 interacts directly with DDX27. Interacts with IRS1 and UBTF. May interact with MAP1B. Sumoylated.

It localises to the nucleus. The protein localises to the nucleolus. The protein resides in the nucleoplasm. It is found in the chromosome. In terms of biological role, component of the PeBoW complex, which is required for maturation of 28S and 5.8S ribosomal RNAs and formation of the 60S ribosome. This is Pescadillo homolog (Pes1) from Rattus norvegicus (Rat).